We begin with the raw amino-acid sequence, 265 residues long: Small ribosomal subunit protein uS2 (265 aa).

Positions 231 to 265 (VEEEYEDYEGAEDDYEYDETEYTDSVIPDDEEEAE) are disordered.

It belongs to the universal ribosomal protein uS2 family.

The sequence is that of Small ribosomal subunit protein uS2 from Trichormus variabilis (strain ATCC 29413 / PCC 7937) (Anabaena variabilis).